The primary structure comprises 430 residues: L-cysteine:1D-myo-inositol 2-amino-2-deoxy-alpha-D-glucopyranoside ligase (430 aa).

A Zn(2+)-binding site is contributed by cysteine 48. Residues cysteine 48 to threonine 51, threonine 63, and asparagine 86 to threonine 88 each bind L-cysteinyl-5'-AMP. Positions isoleucine 50–histidine 60 match the 'HIGH' region motif. A 'ERGGDP' region motif is present at residues glutamate 192 to proline 197. Residue tryptophan 232 participates in L-cysteinyl-5'-AMP binding. Cysteine 236 is a Zn(2+) binding site. Glycine 254–aspartate 256 lines the L-cysteinyl-5'-AMP pocket. Histidine 261 contributes to the Zn(2+) binding site. Isoleucine 288 contributes to the L-cysteinyl-5'-AMP binding site. Residues lysine 294–serine 298 carry the 'KMSKS' region motif.

The protein belongs to the class-I aminoacyl-tRNA synthetase family. MshC subfamily. As to quaternary structure, monomer. The cofactor is Zn(2+).

It carries out the reaction 1D-myo-inositol 2-amino-2-deoxy-alpha-D-glucopyranoside + L-cysteine + ATP = 1D-myo-inositol 2-(L-cysteinylamino)-2-deoxy-alpha-D-glucopyranoside + AMP + diphosphate + H(+). In terms of biological role, catalyzes the ATP-dependent condensation of GlcN-Ins and L-cysteine to form L-Cys-GlcN-Ins. This is L-cysteine:1D-myo-inositol 2-amino-2-deoxy-alpha-D-glucopyranoside ligase (mshC) from Corynebacterium efficiens (strain DSM 44549 / YS-314 / AJ 12310 / JCM 11189 / NBRC 100395).